Reading from the N-terminus, the 491-residue chain is Ketol-acid reductoisomerase (NADP(+)) (491 aa).

The 194-residue stretch at Ala15–Ser208 folds into the KARI N-terminal Rossmann domain. Residues Cys45 to Gln48, Arg68, Arg76, Ser78, and Asp108 to Gln110 contribute to the NADP(+) site. His132 is a catalytic residue. Gly158 contributes to the NADP(+) binding site. KARI C-terminal knotted domains follow at residues Ser209–Gln344 and Tyr345–Met484. Mg(2+) contacts are provided by Asp217, Glu221, Glu389, and Glu393. Position 414 (Ser414) interacts with substrate.

The protein belongs to the ketol-acid reductoisomerase family. Requires Mg(2+) as cofactor.

It carries out the reaction (2R)-2,3-dihydroxy-3-methylbutanoate + NADP(+) = (2S)-2-acetolactate + NADPH + H(+). It catalyses the reaction (2R,3R)-2,3-dihydroxy-3-methylpentanoate + NADP(+) = (S)-2-ethyl-2-hydroxy-3-oxobutanoate + NADPH + H(+). Its pathway is amino-acid biosynthesis; L-isoleucine biosynthesis; L-isoleucine from 2-oxobutanoate: step 2/4. The protein operates within amino-acid biosynthesis; L-valine biosynthesis; L-valine from pyruvate: step 2/4. Involved in the biosynthesis of branched-chain amino acids (BCAA). Catalyzes an alkyl-migration followed by a ketol-acid reduction of (S)-2-acetolactate (S2AL) to yield (R)-2,3-dihydroxy-isovalerate. In the isomerase reaction, S2AL is rearranged via a Mg-dependent methyl migration to produce 3-hydroxy-3-methyl-2-ketobutyrate (HMKB). In the reductase reaction, this 2-ketoacid undergoes a metal-dependent reduction by NADPH to yield (R)-2,3-dihydroxy-isovalerate. In Escherichia fergusonii (strain ATCC 35469 / DSM 13698 / CCUG 18766 / IAM 14443 / JCM 21226 / LMG 7866 / NBRC 102419 / NCTC 12128 / CDC 0568-73), this protein is Ketol-acid reductoisomerase (NADP(+)).